The chain runs to 586 residues: CTP synthase 2 (586 aa).

A Glutamine amidotransferase type-1 domain is found at 300-554 (SIALVGKYTK…LAATGNLNAY (255 aa)). Active-site for GATase activity residues include Cys-399, His-526, and Glu-528. A disordered region spans residues 563–586 (SSDRYSDASDDSFSEPRIAELEIS). Phosphoserine is present on residues Ser-568, Ser-571, and Ser-574.

It belongs to the CTP synthase family.

It catalyses the reaction UTP + L-glutamine + ATP + H2O = CTP + L-glutamate + ADP + phosphate + 2 H(+). Its pathway is pyrimidine metabolism; CTP biosynthesis via de novo pathway; CTP from UDP: step 2/2. Functionally, catalyzes the ATP-dependent amination of UTP to CTP with either L-glutamine or ammonia as the source of nitrogen. Constitutes the rate-limiting enzyme in the synthesis of cytosine nucleotides. This is CTP synthase 2 (CTPS2) from Homo sapiens (Human).